Consider the following 361-residue polypeptide: Divinyl chlorophyll a/b light-harvesting protein PcbE (361 aa).

Helical transmembrane passes span 27–47 (FIGS…ANTL), 88–108 (VAFV…AGLL), 149–169 (FILG…VEWA), 210–230 (VMGG…FHIA), 250–270 (AVLS…AFWC), and 315–335 (LSNV…WHAI).

Belongs to the PsbB/PsbC family. IsiA/Pcb subfamily. As to quaternary structure, the antenna complex consists of divinyl chlorophylls (a and b) and divinyl chlorophyll a/b binding proteins and binds more divinyl chlorophyll b than does the antenna complex from high-light-adapted Prochlorococcus. Divinyl chlorophyll a is required as a cofactor. It depends on divinyl chlorophyll b as a cofactor.

It is found in the cellular thylakoid membrane. Its function is as follows. The antenna complex functions as a light receptor, it captures and delivers excitation energy to photosystems II and I. The Prochlorales pcb genes are not related to higher plant LHCs. This is Divinyl chlorophyll a/b light-harvesting protein PcbE (pcbE) from Prochlorococcus marinus (strain SARG / CCMP1375 / SS120).